A 25-amino-acid polypeptide reads, in one-letter code: Xenoposin precursor fragment BM1 (25 aa).

In terms of tissue distribution, expressed by the skin glands.

The protein localises to the secreted. Functionally, antimicrobial peptide. The sequence is that of Xenoposin precursor fragment BM1 from Xenopus boumbaensis (Mawa clawed frog).